The chain runs to 251 residues: 3-deoxy-manno-octulosonate cytidylyltransferase (251 aa).

Belongs to the KdsB family.

The protein localises to the cytoplasm. It catalyses the reaction 3-deoxy-alpha-D-manno-oct-2-ulosonate + CTP = CMP-3-deoxy-beta-D-manno-octulosonate + diphosphate. Its pathway is nucleotide-sugar biosynthesis; CMP-3-deoxy-D-manno-octulosonate biosynthesis; CMP-3-deoxy-D-manno-octulosonate from 3-deoxy-D-manno-octulosonate and CTP: step 1/1. It functions in the pathway bacterial outer membrane biogenesis; lipopolysaccharide biosynthesis. Its function is as follows. Activates KDO (a required 8-carbon sugar) for incorporation into bacterial lipopolysaccharide in Gram-negative bacteria. The protein is 3-deoxy-manno-octulosonate cytidylyltransferase of Geotalea uraniireducens (strain Rf4) (Geobacter uraniireducens).